A 144-amino-acid polypeptide reads, in one-letter code: Large ribosomal subunit protein uL15 (144 aa).

Positions Met1–Gln54 are disordered. The span at Arg21–Gly31 shows a compositional bias: gly residues.

This sequence belongs to the universal ribosomal protein uL15 family. Part of the 50S ribosomal subunit.

Its function is as follows. Binds to the 23S rRNA. In Klebsiella pneumoniae (strain 342), this protein is Large ribosomal subunit protein uL15.